A 381-amino-acid polypeptide reads, in one-letter code: tRNA (guanine(26)-N(2))-dimethyltransferase (381 aa).

The 373-residue stretch at 6-378 (FEVHEGKAKV…APYEVFVEVM (373 aa)) folds into the Trm1 methyltransferase domain. S-adenosyl-L-methionine-binding residues include arginine 38, arginine 63, aspartate 80, aspartate 122, and alanine 123.

The protein belongs to the class I-like SAM-binding methyltransferase superfamily. Trm1 family. Monomer.

It carries out the reaction guanosine(26) in tRNA + 2 S-adenosyl-L-methionine = N(2)-dimethylguanosine(26) in tRNA + 2 S-adenosyl-L-homocysteine + 2 H(+). In terms of biological role, dimethylates a single guanine residue at position 26 of a number of tRNAs using S-adenosyl-L-methionine as donor of the methyl groups. The chain is tRNA (guanine(26)-N(2))-dimethyltransferase from Pyrococcus furiosus (strain ATCC 43587 / DSM 3638 / JCM 8422 / Vc1).